The primary structure comprises 318 residues: Myoblast determination protein 1 (318 aa).

Met-1 is covalently cross-linked (Peptide (Met-Gly) (interchain with G-Cter in ubiquitin)). Lys-104 is modified (N6-methyllysine; by EHMT2). The 52-residue stretch at 109-160 (DRRKAATMRERRRLSKVNEAFETLKRCTSSNPNQRLPKVEILRNAIRYIEGL) folds into the bHLH domain. 2 disordered regions span residues 175 to 224 (AAFY…RQNG) and 262 to 318 (SPAA…YQVL). Positions 196–206 (SDASSPRSNCS) are enriched in polar residues. The span at 262–271 (SPAAPSLLLP) shows a compositional bias: low complexity. Over residues 272-282 (DAPPESPPGPP) the composition is skewed to pro residues. The segment covering 290–304 (AEQGTQTPSPDSTPQ) has biased composition (polar residues).

As to quaternary structure, efficient DNA binding requires dimerization with another bHLH protein. Seems to form active heterodimers with ITF-2. Interacts with SUV39H1. Interacts with DDX5. Interacts with CHD2. Interacts with TSC22D3. Interacts with SETD3. Interacts with P-TEFB complex; promotes the transcriptional activity of MYOD1 through its CDK9-mediated phosphorylation. Interacts with CSRP3. Interacts with NUPR1. In terms of processing, phosphorylated by CDK9. This phosphorylation promotes its function in muscle differentiation. Acetylated by a complex containing EP300 and PCAF. The acetylation is essential to activate target genes. Conversely, its deacetylation by SIRT1 inhibits its function. Post-translationally, ubiquitinated on the N-terminus; which is required for proteasomal degradation. In terms of processing, methylation at Lys-104 by EHMT2/G9a inhibits myogenic activity.

The protein localises to the nucleus. Acts as a transcriptional activator that promotes transcription of muscle-specific target genes and plays a role in muscle differentiation. Together with MYF5 and MYOG, co-occupies muscle-specific gene promoter core region during myogenesis. Induces fibroblasts to differentiate into myoblasts. Interacts with and is inhibited by the twist protein. This interaction probably involves the basic domains of both proteins. In Rattus norvegicus (Rat), this protein is Myoblast determination protein 1 (Myod1).